A 568-amino-acid polypeptide reads, in one-letter code: Sulfite reductase [NADPH] hemoprotein beta-component (568 aa).

[4Fe-4S] cluster contacts are provided by cysteine 425, cysteine 431, cysteine 470, and cysteine 474. Residue cysteine 474 coordinates siroheme.

The protein belongs to the nitrite and sulfite reductase 4Fe-4S domain family. As to quaternary structure, alpha(8)-beta(8). The alpha component is a flavoprotein, the beta component is a hemoprotein. Siroheme is required as a cofactor. [4Fe-4S] cluster serves as cofactor.

The enzyme catalyses hydrogen sulfide + 3 NADP(+) + 3 H2O = sulfite + 3 NADPH + 4 H(+). It functions in the pathway sulfur metabolism; hydrogen sulfide biosynthesis; hydrogen sulfide from sulfite (NADPH route): step 1/1. Component of the sulfite reductase complex that catalyzes the 6-electron reduction of sulfite to sulfide. This is one of several activities required for the biosynthesis of L-cysteine from sulfate. This Xanthomonas campestris pv. campestris (strain B100) protein is Sulfite reductase [NADPH] hemoprotein beta-component.